We begin with the raw amino-acid sequence, 218 residues long: Recombination protein RecR (218 aa).

The segment at 56-71 (CRICCNISRDEVCRIC) adopts a C4-type zinc-finger fold. In terms of domain architecture, Toprim spans 79-195 (GLICVVEEPK…VVSRLASGMP (117 aa)).

Belongs to the RecR family.

May play a role in DNA repair. It seems to be involved in an RecBC-independent recombinational process of DNA repair. It may act with RecF and RecO. This chain is Recombination protein RecR, found in Corynebacterium efficiens (strain DSM 44549 / YS-314 / AJ 12310 / JCM 11189 / NBRC 100395).